The primary structure comprises 221 residues: MALYCRDTLIIIFQKLTVADLARASCVCKVWNSVATEDDLVVSAFTAPWRIKELVGRPASVSFWRDNGIWKFAISHRICRGDSVTSLAVKYAVQVMDIKRLNNMMSDHGIYSRDRLLIPISNPEILANTTCYVELDKYAKREVAVLYLEGAPKREQPVPGTNQQSNLSADGKRRLIESLRRSMQVDDGTALYYLAIAEGDPRSALSEFSADLRWERQAGLN.

Positions 7–46 (DTLIIIFQKLTVADLARASCVCKVWNSVATEDDLVVSAFT) constitute an F-box domain. A LysM domain is found at 74–118 (ISHRICRGDSVTSLAVKYAVQVMDIKRLNNMMSDHGIYSRDRLLI).

As to quaternary structure, part of a SCF (ASK-cullin-F-box) protein ligase complex. Interacts with SKP1A/ASK1, SKP1B/ASK2, ASK4, ASK11 and ASK13.

The protein operates within protein modification; protein ubiquitination. Functionally, component of SCF(ASK-cullin-F-box) E3 ubiquitin ligase complexes, which may mediate the ubiquitination and subsequent proteasomal degradation of target proteins. The chain is F-box protein At1g55000 from Arabidopsis thaliana (Mouse-ear cress).